The chain runs to 365 residues: Putative F-box/kelch-repeat protein At4g39290 (365 aa).

Residues 10-58 enclose the F-box domain; the sequence is QMTFSMLPDDLVLNCLARVSKVYYPSLSFVSKKFRSLIASTELQELRSF. Kelch repeat units follow at residues 118–165 and 167–213; these read DIYA…CVLN and KIYV…KIVG.

In Arabidopsis thaliana (Mouse-ear cress), this protein is Putative F-box/kelch-repeat protein At4g39290.